The primary structure comprises 94 residues: Defensin alpha 5 (94 aa).

Positions 1–19 (MRTIAILAAILLVALQAQA) are cleaved as a signal peptide. 3 disulfide bridges follow: Cys65-Cys93, Cys67-Cys82, and Cys72-Cys92.

Belongs to the alpha-defensin family. Homodimer. Homotetramer. Interacts with B.antracis lef/lethal factor. In terms of processing, glycosylated. Post-translationally, proteolytically cleaved at Arg-62 by trypsin. Both the propeptide form proHD5/HD5(20-94) and HD5(56-94) are cleaved into the lumenal peptide form HD5(63-94) by trypsin. Unprocessed proHD5 exerts antimicrobial activities, but peptide potency is enhanced by peptide processing. Proteolytically cleaved in duodenal fluid; derived fragments are antimicrobially active against commensal bacteria (in vitro). (Microbial infection) The disulfide bridges and homodimerization are a prerequisite for the enhancement of S.flexneri adhesion and invasion. In terms of tissue distribution, expressed in the gastrointestinal, reproductive, and urinary tracts (at protein level). Expressed in Paneth cells of the small intestine (at protein level). Expressed throughout the urothelium of the lower urinary tract and in the collecting tubules of the kidney (at protein level). Expressed in stratified squamous epithelial cells of the female genital tract epithelia, such as in vagina, ectocervix, endocervix, endometrium, and fallopian tube (at protein level). Endometrial expression correlates with stages of the menstrual cycle: Expression is low during the early proliferative phase, increased during the mid- to late proliferative phase, peaks during the early secretory phase of the cycle, and decreases during the mid- to late secretory phase.

Its subcellular location is the secreted. The protein resides in the cytoplasmic vesicle. It is found in the secretory vesicle. In terms of biological role, host-defense peptide that maintains sterility in the urogenital system. Has antimicrobial activity against a wide range of bacteria, including Gram-negative E.coli, P.aeruginosa and S.typhimurium, and Gram-positive E.aerogenes, S.aureus, B.cereus, E.faecium and L.monocytogenes. Confers resistance to intestinal infection by S.typhimurium. Exhibits antimicrobial activity against enteric commensal bacteria such as B.adolescentis, L.acidophilus, B.breve, L.fermentum, B.longum and S.thermophilus. Binds to bacterial membranes and causes membrane disintegration. Induces the secretion of the chemokine IL-8 by intestinal epithelial cells. Binds to B.antracis lef/lethal factor, a major virulence factor from B.anthracis, and neutralizes its enzymatic activity. Functionally, (Microbial infection) Acts as a target for S.flexneri infection by binding to the bacterium, possibly via bacterial surface proteins, and thereby augmenting infectivity via enhanced bacterial adhesion and invasion of epithelial cells and tissues. This Homo sapiens (Human) protein is Defensin alpha 5 (DEFA5).